The sequence spans 427 residues: 2-oxoglutarate and iron-dependent oxygenase JMJD4 (427 aa).

The JmjC domain occupies serine 147–leucine 306. Histidine 194, aspartate 196, and histidine 274 together coordinate Fe cation.

It belongs to the JMJD6 family. In terms of assembly, interacts with ETF1. Interacts with the ETF1-GSPT1 complex. Requires Fe(2+) as cofactor.

The protein localises to the cytoplasm. It carries out the reaction L-lysyl-[protein] + 2-oxoglutarate + O2 = 4-hydroxy-L-lysyl-[protein] + succinate + CO2. Its function is as follows. Catalyzes the 2-oxoglutarate and iron-dependent C4-lysyl hydroxylation of ETF1 at 'Lys-63' thereby promoting the translational termination efficiency of ETF1. Not essential for embryonic stem cell (ESC) maintenance and the embryonic and postnatal development. In Mus musculus (Mouse), this protein is 2-oxoglutarate and iron-dependent oxygenase JMJD4 (Jmjd4).